Here is a 485-residue protein sequence, read N- to C-terminus: GTPase Obg (485 aa).

An Obg domain is found at 2–159; that stretch reads SKFIDRVVLH…RDLVLELKSV (158 aa). Residues 64–84 are disordered; sequence PHAKAGNGKPGEGGNRDGKMG. Positions 160 to 340 constitute an OBG-type G domain; the sequence is ADVGLVGFPS…LTFALADLVR (181 aa). Residues 166–173, 191–195, 212–215, 292–295, and 321–323 contribute to the GTP site; these read GFPSAGKS, FTTLV, DVPG, NKTD, and SAV. Mg(2+) is bound by residues S173 and T193. The OCT domain maps to 358-438; sequence PIAVDESGFT…IGDVTFDWEP (81 aa). Positions 457 to 469 are enriched in basic and acidic residues; sequence LEQSDRVSAAERK. The segment at 457-485 is disordered; it reads LEQSDRVSAAERKHASRVRRGLVEDDEQR.

It belongs to the TRAFAC class OBG-HflX-like GTPase superfamily. OBG GTPase family. As to quaternary structure, monomer. Requires Mg(2+) as cofactor.

The protein localises to the cytoplasm. An essential GTPase which binds GTP, GDP and possibly (p)ppGpp with moderate affinity, with high nucleotide exchange rates and a fairly low GTP hydrolysis rate. Plays a role in control of the cell cycle, stress response, ribosome biogenesis and in those bacteria that undergo differentiation, in morphogenesis control. This Nocardia farcinica (strain IFM 10152) protein is GTPase Obg.